We begin with the raw amino-acid sequence, 267 residues long: Small ribosomal subunit protein uS2 (267 aa).

Residues 233 to 250 are compositionally biased toward basic and acidic residues; it reads RAESDKAETDKVEVEGKG. Residues 233 to 267 are disordered; sequence RAESDKAETDKVEVEGKGEAPAAEAAEVVESADKA. Positions 251–261 are enriched in low complexity; that stretch reads EAPAAEAAEVV.

It belongs to the universal ribosomal protein uS2 family.

This Syntrophotalea carbinolica (strain DSM 2380 / NBRC 103641 / GraBd1) (Pelobacter carbinolicus) protein is Small ribosomal subunit protein uS2.